We begin with the raw amino-acid sequence, 358 residues long: DNA ligase C (358 aa).

Residue Lys29 is the N6-AMP-lysine intermediate of the active site.

It belongs to the ATP-dependent DNA ligase family. It depends on a divalent metal cation as a cofactor.

The enzyme catalyses ATP + (deoxyribonucleotide)n-3'-hydroxyl + 5'-phospho-(deoxyribonucleotide)m = (deoxyribonucleotide)n+m + AMP + diphosphate.. Functionally, DNA ligase that seals nicks in double-stranded DNA during DNA replication, DNA recombination and DNA repair. This Mycobacterium tuberculosis (strain ATCC 25618 / H37Rv) protein is DNA ligase C (ligC).